The chain runs to 238 residues: MTTPAYKRVLLKLSGEALMGDDPYGINRATIERMVADVSEVSRLGVELAIVIGGGNIFRGVAPGAEGMDRATADYMGMLATVMNSLALADAMRQVGITARVMSAIAIEQVVEPYVRPKALQYLEEGKIVVFAAGTGNPFFTTDTAAALRGAEIGAEIVLKATKVDGVYSADPNKDPDATRYSTITFDEAISKHLQVMDATAFALCRDQKLPIKVFSIVKPGALKRVVMGEDEGTLVHV.

Residue 12-15 (KLSG) participates in ATP binding. Gly54 is a UMP binding site. Positions 55 and 59 each coordinate ATP. UMP is bound by residues Asp74 and 135 to 142 (TGNPFFTT). Residues Thr162, Tyr168, and Asp171 each contribute to the ATP site.

The protein belongs to the UMP kinase family. As to quaternary structure, homohexamer.

Its subcellular location is the cytoplasm. The enzyme catalyses UMP + ATP = UDP + ADP. It functions in the pathway pyrimidine metabolism; CTP biosynthesis via de novo pathway; UDP from UMP (UMPK route): step 1/1. With respect to regulation, inhibited by UTP. Its function is as follows. Catalyzes the reversible phosphorylation of UMP to UDP. This Herminiimonas arsenicoxydans protein is Uridylate kinase.